We begin with the raw amino-acid sequence, 109 residues long: uncharacterized protein (109 aa).

This sequence to A.calcoaceticus putative ferredoxin.

This is an uncharacterized protein from Escherichia coli O157:H7.